Consider the following 161-residue polypeptide: Dihydrofolate reductase (161 aa).

The DHFR domain occupies 1-160; the sequence is MTMVGLIWAQ…LRYRLYSYHR (160 aa). 7-9 provides a ligand contact to substrate; sequence IWA. Residues 8-9 and 16-21 each bind NADP(+); these read WA and IGRGGD. Residues D29 and R34 each coordinate substrate. 45–48 lines the NADP(+) pocket; the sequence is GRRT. R62 contacts substrate. Residues 67–70, G82, and 96–101 each bind NADP(+); these read LSRQ and IGGGQV. Substrate is bound by residues Y102 and T115.

It belongs to the dihydrofolate reductase family.

It carries out the reaction (6S)-5,6,7,8-tetrahydrofolate + NADP(+) = 7,8-dihydrofolate + NADPH + H(+). It functions in the pathway cofactor biosynthesis; tetrahydrofolate biosynthesis; 5,6,7,8-tetrahydrofolate from 7,8-dihydrofolate: step 1/1. Functionally, key enzyme in folate metabolism. Catalyzes an essential reaction for de novo glycine and purine synthesis, and for DNA precursor synthesis. The sequence is that of Dihydrofolate reductase (folA) from Mycobacterium tuberculosis (strain CDC 1551 / Oshkosh).